We begin with the raw amino-acid sequence, 40 residues long: Photosystem II reaction center protein X (40 aa).

Residues Trp-10 to Ile-30 traverse the membrane as a helical segment.

Belongs to the PsbX family. Type 1 subfamily. In terms of assembly, PSII is composed of 1 copy each of membrane proteins PsbA, PsbB, PsbC, PsbD, PsbE, PsbF, PsbH, PsbI, PsbJ, PsbK, PsbL, PsbM, PsbT, PsbX, PsbY, PsbZ, Psb30/Ycf12, peripheral proteins PsbO, CyanoQ (PsbQ), PsbU, PsbV and a large number of cofactors. It forms dimeric complexes.

The protein resides in the cellular thylakoid membrane. Involved in the binding and/or turnover of quinones at the Q(B) site of photosystem II (PSII). PSII is a light-driven water plastoquinone oxidoreductase, using light energy to abstract electrons from H(2)O, generating a proton gradient subsequently used for ATP formation. In Crocosphaera subtropica (strain ATCC 51142 / BH68) (Cyanothece sp. (strain ATCC 51142)), this protein is Photosystem II reaction center protein X.